Reading from the N-terminus, the 1486-residue chain is Chromosome partition protein MukB (1486 aa).

34–41 (GGNGAGKS) serves as a coordination point for ATP. Coiled coils occupy residues 326–418 (LEAD…QYNQ), 444–480 (LETFQAKELEATEKMLSLEQKMSMAQTAHSQFEQAYQ), and 509–603 (RHLA…RAPV). A flexible hinge region spans residues 666–783 (PGGSEDQRLN…EVPLFGRAAR (118 aa)). Coiled-coil stretches lie at residues 835–923 (EAEI…AKLE), 977–1115 (EMLS…TAKA), and 1209–1266 (VEAI…QNVS).

The protein belongs to the SMC family. MukB subfamily. In terms of assembly, homodimerization via its hinge domain. Binds to DNA via its C-terminal region. Interacts, and probably forms a ternary complex, with MukE and MukF via its C-terminal region. The complex formation is stimulated by calcium or magnesium. Interacts with tubulin-related protein FtsZ.

It is found in the cytoplasm. The protein resides in the nucleoid. Functionally, plays a central role in chromosome condensation, segregation and cell cycle progression. Functions as a homodimer, which is essential for chromosome partition. Involved in negative DNA supercoiling in vivo, and by this means organize and compact chromosomes. May achieve or facilitate chromosome segregation by condensation DNA from both sides of a centrally located replisome during cell division. The polypeptide is Chromosome partition protein MukB (Shigella boydii serotype 18 (strain CDC 3083-94 / BS512)).